Reading from the N-terminus, the 113-residue chain is MKITLSKRIGLLAFLLPCALALSTTVHAETNKLVIESGDSAQSRQRAAMEKEQWNDTRNLRQKVNKRTEKEWDKADAAFDNRDKCEQSANINAYWEPNTLRCLDRRTGRVIIP.

Positions 1-28 (MKITLSKRIGLLAFLLPCALALSTTVHA) are cleaved as a signal peptide.

The protein belongs to the UPF0482 family.

This is UPF0482 protein YnfB from Escherichia coli O127:H6 (strain E2348/69 / EPEC).